A 529-amino-acid polypeptide reads, in one-letter code: Beta-hexosaminidase subunit alpha (529 aa).

Residues 1 to 22 (MAGSTLRFSLLLAAAFAGRATA) form the signal peptide. A propeptide spanning residues 23-88 (LWPWPQYIQT…RFPHPIEKRH (66 aa)) is cleaved from the precursor. A disulfide bond links C58 and C104. N-linked (GlcNAc...) asparagine glycosylation is found at N115, N157, and N295. Cysteines 277 and 328 form a disulfide. E323 acts as the Proton donor in catalysis. Residues 423–424 (NH) are critical for hydrolysis GM2 gangliosides. C505 and C522 are disulfide-bonded.

This sequence belongs to the glycosyl hydrolase 20 family. There are 3 beta-hexosaminidase isozymes: isozyme A (hexosaminidase A) is a heterodimer composed of one subunit alpha and one subunit beta (chain A and B); isozyme B (hexosaminidase B) is a homodimer of two beta subunits (two chains A and B); isozyme S (hexosaminidase S) is a homodimer of two alpha subunits. The composition of the dimer (isozyme A versus isozyme S) has a significant effect on the substrate specificity of the alpha subunit active site.

It localises to the lysosome. It catalyses the reaction Hydrolysis of terminal non-reducing N-acetyl-D-hexosamine residues in N-acetyl-beta-D-hexosaminides.. It carries out the reaction N-acetyl-beta-D-galactosaminyl-(1-&gt;4)-beta-D-3-sulfogalactosyl-(1-&gt;4)-beta-D-glucosyl-(1&lt;-&gt;1')-ceramide + H2O = a beta-D-3-sulfogalactosyl-(1-&gt;4)-beta-D-glucosyl-(1&lt;-&gt;1')-ceramide + N-acetyl-beta-D-galactosamine. The catalysed reaction is a ganglioside GM2 (d18:1(4E)) + H2O = a ganglioside GM3 (d18:1(4E)) + N-acetyl-beta-D-galactosamine. The enzyme catalyses a ganglioside GM2 + H2O = a ganglioside GM3 + N-acetyl-beta-D-galactosamine. It catalyses the reaction beta-D-GalNAc-(1-&gt;4)-alpha-L-IdoA-(1-&gt;3)-beta-D-GalNAc-4-sulfate-(1-&gt;4)-alpha-L-IdoA-(1-&gt;3)-D-GalNAc-4-sulfate + H2O = alpha-L-IdoA-(1-&gt;3)-beta-D-GalNAc-4-sulfate-(1-&gt;4)-alpha-L-IdoA-(1-&gt;3)-D-GalNAc-4-sulfate + N-acetyl-D-galactosamine. It carries out the reaction N-acetyl-beta-D-6-sulfogalactosaminyl-(1-&gt;4)-alpha-L-iduronyl-(1-&gt;3)-N-acetyl-D-6-sulfogalactosamine + H2O = alpha-L-iduronyl-(1-&gt;3)-N-acetyl-D-6-sulfogalactosamine + N-acetyl-D-6-sulfogalactosamine. Addition of GM2A stimulates the hydrolysis of sulfated glycosphingolipid SM2 and the ganglioside GM2. Its function is as follows. Hydrolyzes the non-reducing end N-acetyl-D-hexosamine and/or sulfated N-acetyl-D-hexosamine of glycoconjugates, such as the oligosaccharide moieties from proteins and neutral glycolipids, or from certain mucopolysaccharides. The isozyme S is as active as the isozyme A on the anionic bis-sulfated glycans, the chondroitin-6-sulfate trisaccharide (C6S-3), and the dermatan sulfate pentasaccharide, and the sulfated glycosphingolipid SM2. The isozyme B does not hydrolyze each of these substrates, however hydrolyzes efficiently neutral oligosaccharide. Only the isozyme A is responsible for the degradation of GM2 gangliosides in the presence of GM2A. In Bos taurus (Bovine), this protein is Beta-hexosaminidase subunit alpha.